A 210-amino-acid chain; its full sequence is Ribosomal RNA small subunit methyltransferase G (210 aa).

Residues glycine 76, leucine 81, 127 to 128 (VE), and arginine 142 each bind S-adenosyl-L-methionine.

It belongs to the methyltransferase superfamily. RNA methyltransferase RsmG family.

Its subcellular location is the cytoplasm. It catalyses the reaction guanosine(527) in 16S rRNA + S-adenosyl-L-methionine = N(7)-methylguanosine(527) in 16S rRNA + S-adenosyl-L-homocysteine. Its function is as follows. Specifically methylates the N7 position of guanine in position 527 of 16S rRNA. The chain is Ribosomal RNA small subunit methyltransferase G from Vibrio cholerae serotype O1 (strain ATCC 39315 / El Tor Inaba N16961).